The sequence spans 335 residues: Tetraacyldisaccharide 4'-kinase (335 aa).

58–65 (TVGGSGKT) serves as a coordination point for ATP.

It belongs to the LpxK family.

It carries out the reaction a lipid A disaccharide + ATP = a lipid IVA + ADP + H(+). It functions in the pathway glycolipid biosynthesis; lipid IV(A) biosynthesis; lipid IV(A) from (3R)-3-hydroxytetradecanoyl-[acyl-carrier-protein] and UDP-N-acetyl-alpha-D-glucosamine: step 6/6. In terms of biological role, transfers the gamma-phosphate of ATP to the 4'-position of a tetraacyldisaccharide 1-phosphate intermediate (termed DS-1-P) to form tetraacyldisaccharide 1,4'-bis-phosphate (lipid IVA). This is Tetraacyldisaccharide 4'-kinase from Shewanella sp. (strain MR-4).